The chain runs to 327 residues: Interleukin-12 subunit beta (327 aa).

The first 22 residues, 1-22, serve as a signal peptide directing secretion; that stretch reads MHPQQLVVSWFSLVLLASPIVA. Residues 23 to 106 form the Ig-like C2-type domain; the sequence is IWELEKNVYI…LSRSLLLLHK (84 aa). Cys50 and Cys90 are disulfide-bonded. N-linked (GlcNAc...) asparagine glycosylation occurs at Asn223. The 90-residue stretch at 238–327 folds into the Fibronectin type-III domain; the sequence is PPKNLQLRPL…WSEWASVSCS (90 aa).

This sequence belongs to the IL-12B family. As to quaternary structure, heterodimer with IL12A; disulfide-linked. The heterodimer is known as interleukin IL-12. Heterodimer with IL23A; disulfide-linked. The heterodimer is known as interleukin IL-23. Also secreted as a monomer. Interacts with NBR1; this interaction promotes IL-12 secretion.

The protein localises to the secreted. Cytokine that can act as a growth factor for activated T and NK cells, enhance the lytic activity of NK/lymphokine-activated killer cells, and stimulate the production of IFN-gamma by resting PBMC. The protein is Interleukin-12 subunit beta (IL12B) of Bubalus carabanensis (Swamp type water buffalo).